We begin with the raw amino-acid sequence, 74 residues long: Putative membrane protein insertion efficiency factor (74 aa).

Belongs to the UPF0161 family.

The protein resides in the cell inner membrane. Its function is as follows. Could be involved in insertion of integral membrane proteins into the membrane. In Leptospira interrogans serogroup Icterohaemorrhagiae serovar copenhageni (strain Fiocruz L1-130), this protein is Putative membrane protein insertion efficiency factor.